Reading from the N-terminus, the 338-residue chain is MQIDHSGDSSEASQAHDSKLHHSHLLGNIPLGLPEARRRVKILVSVDFDAVSGWMGTGQHSRNCLSDYSAGIFAGRVGVGRLLKILDRVGIAEKVTWFIPGHSMETFPLETKAIVDSGAEIALHGYCHEDCTQLDPQQQQDILDKCITLAESLTGKRPVGFRAPLYRIDHDTISLLERKGFLYDTSLSGHDAQLYYLDSGFPLDVVDYSKSASTWMKPSPQPRQLSVVEIPANWYMEDMTPMQFLPNVTNSHGFVSSEAIEKMWKDRFNWLWNWGPDGSGPGDFVFPLVLHPDTSGMAHVAGTIEGMLRWLKEWGPQVEFVTYEEAAREFLLDKEVPA.

Residues Asp-49, His-124, and His-128 each coordinate Zn(2+). A NodB homology domain is found at 65–257 (LSDYSAGIFA…VTNSHGFVSS (193 aa)).

Belongs to the polysaccharide deacetylase family.

Its function is as follows. Peptidoglycan deacetylase-like protein; part of the Fg3_54/C64 gene cluster that mediates the biosynthesis of the octapeptide fusaoctaxin A, a virulence factor that is required for cell-to-cell invasiveness of plant host. The 2 nonribosomal peptide synthetases NRPS9 and NRPS5 form an assembly line which likely utilizes GABA as a starter unit (loaded on the unique module M1 of NRPS9) and sequentially incorporates seven extender units composed of the residues L-Ala, L-allo-Ile, L-Ser, L-Val, L-Ser, L-Leu and L-Leu, respectively. During the process, each of the residues that are tethered on modules M3-M7 of NRPS5 containing an E domain can undergo an epimerization reaction to produce a D-configuration before the transpeptidation reaction occurs. The elongation of the peptidyl chain might be terminated by module M8-mediated L-Leu incorporation, followed by R domain-catalyzed 4 electron reduction to release the resulting octapeptide from the assembly line as an alcohol. Fusaoctaxin A is cleaved by the cluster specific ABC transporter FGM5 to the pentapeptide fusapentaxin A and the tripeptide fusatrixin A. The other enzymes from the cluster, FGM1, FGM2, FGM3 and FGM9 seem not to be involved in the biosynthesis of fusaoctaxin A and their functions have still to be determined. The chain is Peptidoglycan deacetylase-like protein FGM2 from Gibberella zeae (strain ATCC MYA-4620 / CBS 123657 / FGSC 9075 / NRRL 31084 / PH-1) (Wheat head blight fungus).